The sequence spans 122 residues: MRHKHGYRKLGRVSEHRQALLRNLACDLIENGRIETTVPKAKELRKYVEKLITKSKNADLNTHRYVYSKLGSNERAKAATRKVIEEIAPKFENRKGGYTRIIKTRFRRGDAAEMCIIEFVGE.

This sequence belongs to the bacterial ribosomal protein bL17 family. In terms of assembly, part of the 50S ribosomal subunit. Contacts protein L32.

The chain is Large ribosomal subunit protein bL17 from Nautilia profundicola (strain ATCC BAA-1463 / DSM 18972 / AmH).